The following is a 92-amino-acid chain: DNA-directed RNA polymerase subunit omega (92 aa).

The protein belongs to the RNA polymerase subunit omega family. The RNAP catalytic core consists of 2 alpha, 1 beta, 1 beta' and 1 omega subunit. When a sigma factor is associated with the core the holoenzyme is formed, which can initiate transcription.

The catalysed reaction is RNA(n) + a ribonucleoside 5'-triphosphate = RNA(n+1) + diphosphate. Functionally, promotes RNA polymerase assembly. Latches the N- and C-terminal regions of the beta' subunit thereby facilitating its interaction with the beta and alpha subunits. This is DNA-directed RNA polymerase subunit omega from Shewanella baltica (strain OS223).